A 533-amino-acid chain; its full sequence is 2-isopropylmalate synthase (533 aa).

The region spanning 8–269 (IIIFDTTLRD…YYNPFLGRPA (262 aa)) is the Pyruvate carboxyltransferase domain. Mn(2+) is bound by residues D17, H208, H210, and N244. Residues 408–533 (RLELVQVSCG…VSANPAKASL (126 aa)) form a regulatory domain region.

It belongs to the alpha-IPM synthase/homocitrate synthase family. LeuA type 1 subfamily. In terms of assembly, homodimer. Mn(2+) is required as a cofactor.

It is found in the cytoplasm. The catalysed reaction is 3-methyl-2-oxobutanoate + acetyl-CoA + H2O = (2S)-2-isopropylmalate + CoA + H(+). The protein operates within amino-acid biosynthesis; L-leucine biosynthesis; L-leucine from 3-methyl-2-oxobutanoate: step 1/4. Functionally, catalyzes the condensation of the acetyl group of acetyl-CoA with 3-methyl-2-oxobutanoate (2-ketoisovalerate) to form 3-carboxy-3-hydroxy-4-methylpentanoate (2-isopropylmalate). This Picosynechococcus sp. (strain ATCC 27264 / PCC 7002 / PR-6) (Agmenellum quadruplicatum) protein is 2-isopropylmalate synthase.